The sequence spans 415 residues: Serine--tRNA ligase (415 aa).

L-serine is bound at residue 231-233 (TAE). 262 to 264 (RSE) is a binding site for ATP. Glutamate 285 is a binding site for L-serine. 349–352 (EISS) provides a ligand contact to ATP. Residue serine 383 participates in L-serine binding.

It belongs to the class-II aminoacyl-tRNA synthetase family. Type-1 seryl-tRNA synthetase subfamily. As to quaternary structure, homodimer. The tRNA molecule binds across the dimer.

It localises to the cytoplasm. It catalyses the reaction tRNA(Ser) + L-serine + ATP = L-seryl-tRNA(Ser) + AMP + diphosphate + H(+). The enzyme catalyses tRNA(Sec) + L-serine + ATP = L-seryl-tRNA(Sec) + AMP + diphosphate + H(+). It functions in the pathway aminoacyl-tRNA biosynthesis; selenocysteinyl-tRNA(Sec) biosynthesis; L-seryl-tRNA(Sec) from L-serine and tRNA(Sec): step 1/1. Its function is as follows. Catalyzes the attachment of serine to tRNA(Ser). Is also able to aminoacylate tRNA(Sec) with serine, to form the misacylated tRNA L-seryl-tRNA(Sec), which will be further converted into selenocysteinyl-tRNA(Sec). The polypeptide is Serine--tRNA ligase (Helicobacter pylori (strain P12)).